Reading from the N-terminus, the 84-residue chain is RNA-binding protein Hfq (84 aa).

The Sm domain occupies 11–71 (DTFLNHVRKN…ISTIMPGHPV (61 aa)).

The protein belongs to the Hfq family. In terms of assembly, homohexamer.

Its function is as follows. RNA chaperone that binds small regulatory RNA (sRNAs) and mRNAs to facilitate mRNA translational regulation in response to envelope stress, environmental stress and changes in metabolite concentrations. Also binds with high specificity to tRNAs. This Methylorubrum populi (strain ATCC BAA-705 / NCIMB 13946 / BJ001) (Methylobacterium populi) protein is RNA-binding protein Hfq.